The chain runs to 194 residues: Large ribosomal subunit protein eL15 (194 aa).

Residues 162-194 (LTSAGRKSRGLRNKGKGAEKVRPSVRANKGKTK) form a disordered region. A compositionally biased stretch (basic residues) spans 167–176 (RKSRGLRNKG).

This sequence belongs to the eukaryotic ribosomal protein eL15 family.

This Thermococcus onnurineus (strain NA1) protein is Large ribosomal subunit protein eL15.